The following is a 102-amino-acid chain: Large ribosomal subunit protein bL21 (102 aa).

It belongs to the bacterial ribosomal protein bL21 family. In terms of assembly, part of the 50S ribosomal subunit. Contacts protein L20.

Its function is as follows. This protein binds to 23S rRNA in the presence of protein L20. The sequence is that of Large ribosomal subunit protein bL21 from Enterococcus faecalis (strain ATCC 700802 / V583).